The sequence spans 148 residues: Ergosterol biosynthetic protein 28 (148 aa).

The Cytoplasmic segment spans residues 1–25 (MFSLQDVITTTKTTLAAMPKGYLPK). Residues 26–46 (WLLFISIVSVFNSIQTYVSGL) form a helical membrane-spanning segment. The Lumenal segment spans residues 47–92 (ELTRKVYERKPTETTHLSARTFGTWTFISCVIRFYGAMYLNEPHIF). The helical transmembrane segment at 93-113 (ELVFMSYMVALFHFGSELLIF) threads the bilayer. Over 114–120 (RTCKLGK) the chain is Cytoplasmic. A helical membrane pass occupies residues 121 to 136 (GFMGPLVVSTTSLVWM). At 137-148 (YKQREYYTGVAW) the chain is on the lumenal side.

Belongs to the ERG28 family. In terms of assembly, heterotetramer of ERG25, ERG26, ERG27 and ERG28. ERG28 acts as a scaffold to tether ERG27 and other 4,4-demethylation-related enzymes, forming a demethylation enzyme complex, in the endoplasmic reticulum. Interacts with ERG25, ERG26 and ERG27. Also interacts with ERG1, ERG3, ERG5, ERG6 and ERG11.

The protein resides in the endoplasmic reticulum membrane. Its function is as follows. Part of the third module of ergosterol biosynthesis pathway that includes the late steps of the pathway. ERG28 has a role as a scaffold to help anchor the catalytic components of the C-4 demethylation complex ERG25, ERG26 and ERG27 to the endoplasmic reticulum. The third module or late pathway involves the ergosterol synthesis itself through consecutive reactions that mainly occur in the endoplasmic reticulum (ER) membrane. Firstly, the squalene synthase ERG9 catalyzes the condensation of 2 farnesyl pyrophosphate moieties to form squalene, which is the precursor of all steroids. Squalene synthase is crucial for balancing the incorporation of farnesyl diphosphate (FPP) into sterol and nonsterol isoprene synthesis. Secondly, the squalene epoxidase ERG1 catalyzes the stereospecific oxidation of squalene to (S)-2,3-epoxysqualene, which is considered to be a rate-limiting enzyme in steroid biosynthesis. Then, the lanosterol synthase ERG7 catalyzes the cyclization of (S)-2,3 oxidosqualene to lanosterol, a reaction that forms the sterol core. In the next steps, lanosterol is transformed to zymosterol through a complex process involving various demethylation, reduction and desaturation reactions. The lanosterol 14-alpha-demethylase ERG11 (also known as CYP51) catalyzes C14-demethylation of lanosterol to produce 4,4'-dimethyl cholesta-8,14,24-triene-3-beta-ol, which is critical for ergosterol biosynthesis. The C-14 reductase ERG24 reduces the C14=C15 double bond of 4,4-dimethyl-cholesta-8,14,24-trienol to produce 4,4-dimethyl-cholesta-8,24-dienol. 4,4-dimethyl-cholesta-8,24-dienol is substrate of the C-4 demethylation complex ERG25-ERG26-ERG27 in which ERG25 catalyzes the three-step monooxygenation required for the demethylation of 4,4-dimethyl and 4alpha-methylsterols, ERG26 catalyzes the oxidative decarboxylation that results in a reduction of the 3-beta-hydroxy group at the C-3 carbon to an oxo group, and ERG27 is responsible for the reduction of the keto group on the C-3. ERG28 has a role as a scaffold to help anchor ERG25, ERG26 and ERG27 to the endoplasmic reticulum and ERG29 regulates the activity of the iron-containing C4-methylsterol oxidase ERG25. Then, the sterol 24-C-methyltransferase ERG6 catalyzes the methyl transfer from S-adenosyl-methionine to the C-24 of zymosterol to form fecosterol. The C-8 sterol isomerase ERG2 catalyzes the reaction which results in unsaturation at C-7 in the B ring of sterols and thus converts fecosterol to episterol. The sterol-C5-desaturase ERG3 then catalyzes the introduction of a C-5 double bond in the B ring to produce 5-dehydroepisterol. The C-22 sterol desaturase ERG5 further converts 5-dehydroepisterol into ergosta-5,7,22,24(28)-tetraen-3beta-ol by forming the C-22(23) double bond in the sterol side chain. Finally, ergosta-5,7,22,24(28)-tetraen-3beta-ol is substrate of the C-24(28) sterol reductase ERG4 to produce ergosterol. The sequence is that of Ergosterol biosynthetic protein 28 from Saccharomyces cerevisiae (strain ATCC 204508 / S288c) (Baker's yeast).